Reading from the N-terminus, the 158-residue chain is Large ribosomal subunit protein uL16 (158 aa).

This sequence belongs to the universal ribosomal protein uL16 family. As to quaternary structure, part of the 50S ribosomal subunit.

Binds 23S rRNA and is also seen to make contacts with the A and possibly P site tRNAs. The sequence is that of Large ribosomal subunit protein uL16 from Parasynechococcus marenigrum (strain WH8102).